The chain runs to 321 residues: Phosphopantothenate--cysteine ligase 1 (321 aa).

The protein belongs to the PPC synthetase family. Homodimer.

It carries out the reaction (R)-4'-phosphopantothenate + L-cysteine + CTP = N-[(R)-4-phosphopantothenoyl]-L-cysteine + CMP + diphosphate + H(+). It participates in cofactor biosynthesis; coenzyme A biosynthesis; CoA from (R)-pantothenate: step 2/5. In terms of biological role, catalyzes the first step in the biosynthesis of coenzyme A from vitamin B5, where cysteine is conjugated to 4'-phosphopantothenate to form 4-phosphopantothenoylcysteine. The sequence is that of Phosphopantothenate--cysteine ligase 1 from Oryza sativa subsp. japonica (Rice).